The following is a 1115-amino-acid chain: Integrin alpha-PS3 (1115 aa).

The signal sequence occupies residues 1 to 24 (MNAESTMFPHIFLALLALISHIEA). Topologically, residues 25 to 1054 (FNFMPRPSRV…PNIISKHQET (1030 aa)) are extracellular. 7 FG-GAP repeats span residues 39-99 (KHLK…VCSP), 113-174 (SEYT…STPQ), 193-246 (DNGN…VDNP), 278-335 (IPTP…GKSI), 336-397 (HKYH…FNFE), 398-453 (RQIL…GLRD), and 460-522 (DAPS…SESR). 3 N-linked (GlcNAc...) asparagine glycosylation sites follow: Asn-46, Asn-82, and Asn-166. A glycan (N-linked (GlcNAc...) asparagine) is linked at Asn-438. Residues Asn-696, Asn-845, Asn-868, and Asn-964 are each glycosylated (N-linked (GlcNAc...) asparagine). The chain crosses the membrane as a helical span at residues 1055 to 1075 (GLPIWIIIVSVIGGLLLLSAI). Residues 1076–1115 (SYLLYKFGFFNRTKKDELDRLVQQNPVEPEAENLNSGGNN) lie on the Cytoplasmic side of the membrane.

The protein belongs to the integrin alpha chain family. As to quaternary structure, heterodimer of an alpha and a beta subunit. The alpha subunit is composed of a heavy and a light chain linked by a disulfide bond. Interacts with mys/beta-PS and Itgbn. Expressed in embryonic and larval hemocytes (at protein level). Expressed in tissues undergoing invagination, tissue movement and morphogenesis such as salivary gland, trachea, midgut endoderm, dorsal vessel, midline of the ventral nerve cord, amnioserosa and the amnioproctodeal invagination. Expressed in the mushroom body neuropil, brain areas that contain mushroom body processes in synaptic contact with other neurons. In egg chambers, expressed in border cells, in stretch cells and in dorsal appendage primordia.

It localises to the apical cell membrane. The protein resides in the lateral cell membrane. It is found in the cytoplasm. Its function is as follows. Integrin alpha-PS3/beta-PS is a receptor for laminin. Also binds to wb. Important during embryogenesis for the development of the trachea, dorsal vessel and salivary gland, as well as for dorsal closure. Required for short-term memory processes. Minor involvement in the establishment of the oocyte anterior-posterior length. Plays a role in timely border cell migration during oogenesis, probably mediated by JNK signaling. Integrin alpha-PS3/Itgbn is required for effective phagocytosis of apoptotic cells during embryonic development and for the phagocytic elimination of S.aureus by mediating the binding of S.aureus peptidoglycan to larval hemocytes, which probably activates a signaling pathway involving Rac1 and Rac2. Integrin alpha-PS3/Itgbn also regulates Fak activity during neuromuscular junction (NMJ) growth and is required for its activation in presynapsis of NMJs. Seems to be dispensable for major morphogenetic processes. This is Integrin alpha-PS3 (scb) from Drosophila melanogaster (Fruit fly).